Reading from the N-terminus, the 279-residue chain is Expansin-A22 (279 aa).

Residues 1–27 form the signal peptide; the sequence is MKLLEKMIYVEFLMIIMVIWVVPMSYG. The Expansin-like EG45 domain maps to 76 to 186; the sequence is QGACGYGNLF…RRIPCSKTGG (111 aa). One can recognise an Expansin-like CBD domain in the interval 196–275; sequence YFLMVLIYNV…NWGFGQTFDG (80 aa).

It belongs to the expansin family. Expansin A subfamily.

Its subcellular location is the secreted. It is found in the cell wall. The protein localises to the membrane. In terms of biological role, causes loosening and extension of plant cell walls by disrupting non-covalent bonding between cellulose microfibrils and matrix glucans. No enzymatic activity has been found. In Arabidopsis thaliana (Mouse-ear cress), this protein is Expansin-A22 (EXPA22).